Consider the following 387-residue polypeptide: Alpha-sarcoglycan (387 aa).

Residues M1–A23 form the signal peptide. Over Q24–T293 the chain is Extracellular. N174 and N246 each carry an N-linked (GlcNAc...) asparagine glycan. The helical transmembrane segment at L294–F314 threads the bilayer. Over R315–H387 the chain is Cytoplasmic. Phosphoserine is present on S377.

It belongs to the sarcoglycan alpha/epsilon family. As to quaternary structure, cross-link to form 2 major subcomplexes: one consisting of SGCB, SGCD and SGCG and the other consisting of SGCB and SGCD. The association between SGCB and SGCG is particularly strong while SGCA is loosely associated with the other sarcoglycans. Interacts with the syntrophin SNTA1. Striated muscle, both skeletal and cardiac.

The protein resides in the cell membrane. The protein localises to the sarcolemma. It localises to the cytoplasm. Its subcellular location is the cytoskeleton. Component of the sarcoglycan complex, a subcomplex of the dystrophin-glycoprotein complex which forms a link between the F-actin cytoskeleton and the extracellular matrix. This is Alpha-sarcoglycan (Sgca) from Mus musculus (Mouse).